A 226-amino-acid chain; its full sequence is 2,3-bisphosphoglycerate-dependent phosphoglycerate mutase (226 aa).

Substrate-binding positions include Arg8–Asn15, Thr21–Gly22, Arg58, Glu109–Tyr112, Lys120, Arg136–Arg137, and Gly180–Asn181. The active-site Tele-phosphohistidine intermediate is the His9. Glu109 serves as the catalytic Proton donor/acceptor.

Belongs to the phosphoglycerate mutase family. BPG-dependent PGAM subfamily.

The enzyme catalyses (2R)-2-phosphoglycerate = (2R)-3-phosphoglycerate. The protein operates within carbohydrate degradation; glycolysis; pyruvate from D-glyceraldehyde 3-phosphate: step 3/5. Catalyzes the interconversion of 2-phosphoglycerate and 3-phosphoglycerate. This chain is 2,3-bisphosphoglycerate-dependent phosphoglycerate mutase, found in Chlamydia trachomatis serovar L2 (strain ATCC VR-902B / DSM 19102 / 434/Bu).